Consider the following 509-residue polypeptide: 2,3-bisphosphoglycerate-independent phosphoglycerate mutase (509 aa).

Aspartate 11 provides a ligand contact to Mn(2+). Residue tyrosine 35 is modified to Phosphotyrosine. Serine 61 is a binding site for Mn(2+). Serine 61 functions as the Phosphoserine intermediate in the catalytic mechanism. Residues histidine 122, arginine 152–aspartate 153, arginine 184, arginine 190, arginine 260–arginine 263, and lysine 335 each bind substrate. Mn(2+) is bound by residues aspartate 402, histidine 406, aspartate 443, histidine 444, and histidine 461.

It belongs to the BPG-independent phosphoglycerate mutase family. As to quaternary structure, monomer. The cofactor is Mn(2+).

The enzyme catalyses (2R)-2-phosphoglycerate = (2R)-3-phosphoglycerate. It functions in the pathway carbohydrate degradation; glycolysis; pyruvate from D-glyceraldehyde 3-phosphate: step 3/5. Functionally, essential for rapid growth and for sporulation. Catalyzes the interconversion of 2-phosphoglycerate and 3-phosphoglycerate. The protein is 2,3-bisphosphoglycerate-independent phosphoglycerate mutase of Bacillus cereus (strain ATCC 10987 / NRS 248).